Reading from the N-terminus, the 493-residue chain is Cobyric acid synthase (493 aa).

Positions 246 to 440 (PIDIAVIKMP…IHGVFDGVSF (195 aa)) constitute a GATase cobBQ-type domain. Cys-326 serves as the catalytic Nucleophile. His-432 is an active-site residue.

Belongs to the CobB/CobQ family. CobQ subfamily.

Its pathway is cofactor biosynthesis; adenosylcobalamin biosynthesis. Functionally, catalyzes amidations at positions B, D, E, and G on adenosylcobyrinic A,C-diamide. NH(2) groups are provided by glutamine, and one molecule of ATP is hydrogenolyzed for each amidation. This is Cobyric acid synthase from Clostridium botulinum (strain Langeland / NCTC 10281 / Type F).